Consider the following 229-residue polypeptide: Endonuclease V (229 aa).

Mg(2+) contacts are provided by D36 and D104.

Belongs to the endonuclease V family. Mg(2+) serves as cofactor.

It is found in the cytoplasm. The enzyme catalyses Endonucleolytic cleavage at apurinic or apyrimidinic sites to products with a 5'-phosphate.. Its function is as follows. DNA repair enzyme involved in the repair of deaminated bases. Selectively cleaves double-stranded DNA at the second phosphodiester bond 3' to a deoxyinosine leaving behind the intact lesion on the nicked DNA. This chain is Endonuclease V, found in Pectobacterium carotovorum subsp. carotovorum (strain PC1).